Consider the following 280-residue polypeptide: Nucleotide-binding protein CV_3336 (280 aa).

8–15 (GLSGSGKS) contacts ATP. 57–60 (DTRS) is a binding site for GTP.

It belongs to the RapZ-like family.

Displays ATPase and GTPase activities. The polypeptide is Nucleotide-binding protein CV_3336 (Chromobacterium violaceum (strain ATCC 12472 / DSM 30191 / JCM 1249 / CCUG 213 / NBRC 12614 / NCIMB 9131 / NCTC 9757 / MK)).